We begin with the raw amino-acid sequence, 331 residues long: MKKPVVIGLAVVVLAAVVAGGYWWYQSRQDNGLTLYGNVDIRTVNLSFRVGGRVESLAVDEGDAIKAGQVLGELDHKPYEIALMQAKAGVSVAQAQYDLMLAGYRDEEIAQAAAAVKQAQAAYDYAQNFYNRQQGLWKSRTISANDLENARSSRDQAQATLKSAQDKLRQYRSGNREQDIAQAKASLEQAQAQLAQAELNLQDSTLIAPSDGTLLTRAVEPGTVLNEGGTVFTVSLTRPVWVRAYVDERNLDQAQPGRKVLLYTDGRPDKPYHGQIGFVSPTAEFTPKTVETPDLRTDLVYRLRIVVTDADDALRQGMPVTVQFGNEAGHE.

A signal peptide spans 1–15 (MKKPVVIGLAVVVLA). A coiled-coil region spans residues 107–208 (EEIAQAAAAV…LNLQDSTLIA (102 aa)).

It belongs to the UPF0194 family.

Its subcellular location is the periplasm. The polypeptide is UPF0194 membrane protein YbhG (Escherichia coli O139:H28 (strain E24377A / ETEC)).